The sequence spans 353 residues: Outer membrane protein P2 (353 aa).

Residues 1-20 (MKKTLAALIVGAFAASAANA) form the signal peptide.

This sequence belongs to the Gram-negative porin family. Homotrimer.

Its subcellular location is the cell outer membrane. Functionally, forms pores that allow passive diffusion of small molecules across the outer membrane. The polypeptide is Outer membrane protein P2 (ompP2) (Haemophilus influenzae).